The sequence spans 431 residues: Adenylosuccinate synthetase (431 aa).

GTP-binding positions include 15-21 (GDEGKGK) and 43-45 (GHT). Asp16 (proton acceptor) is an active-site residue. Mg(2+)-binding residues include Asp16 and Gly43. IMP-binding positions include 16–19 (DEGK), 41–44 (NAGH), Thr135, Arg149, Asn227, Thr242, and Arg306. The active-site Proton donor is the His44. 302–308 (VTTGRKR) is a binding site for substrate. GTP is bound by residues Arg308, 334–336 (KLD), and 416–418 (GVG).

The protein belongs to the adenylosuccinate synthetase family. In terms of assembly, homodimer. It depends on Mg(2+) as a cofactor.

It is found in the cytoplasm. It carries out the reaction IMP + L-aspartate + GTP = N(6)-(1,2-dicarboxyethyl)-AMP + GDP + phosphate + 2 H(+). Its pathway is purine metabolism; AMP biosynthesis via de novo pathway; AMP from IMP: step 1/2. Functionally, plays an important role in the de novo pathway and in the salvage pathway of purine nucleotide biosynthesis. Catalyzes the first committed step in the biosynthesis of AMP from IMP. This is Adenylosuccinate synthetase from Monosiga brevicollis (Choanoflagellate).